The sequence spans 194 residues: dCTP deaminase (194 aa).

DCTP contacts are provided by residues 110-115 (RSSLAR), aspartate 128, 136-138 (VLE), tyrosine 171, lysine 178, and glutamine 182. Residue glutamate 138 is the Proton donor/acceptor of the active site. A disordered region spans residues 173 to 194 (SRQDAKYKNQQSAVASRINQDR). Positions 180 to 194 (KNQQSAVASRINQDR) are enriched in polar residues.

Belongs to the dCTP deaminase family. Homotrimer.

The catalysed reaction is dCTP + H2O + H(+) = dUTP + NH4(+). Its pathway is pyrimidine metabolism; dUMP biosynthesis; dUMP from dCTP (dUTP route): step 1/2. Its function is as follows. Catalyzes the deamination of dCTP to dUTP. The polypeptide is dCTP deaminase (Actinobacillus succinogenes (strain ATCC 55618 / DSM 22257 / CCUG 43843 / 130Z)).